The chain runs to 233 residues: Esterase FUS5 (233 aa).

Residues S105, D159, and H187 each act as charge relay system in the active site.

Belongs to the LovG family.

Functionally, esterase; part of the gene cluster that mediates the biosynthesis of the mycotoxin fusarin C. Within the cluster, FUS1, FUS2, FUS8 and FUS9 are sufficient for fusarin production. The other FUS cluster members are not essential for fusarin C biosynthesis. The polypeptide is Esterase FUS5 (Gibberella fujikuroi (strain CBS 195.34 / IMI 58289 / NRRL A-6831) (Bakanae and foot rot disease fungus)).